Consider the following 372-residue polypeptide: MGKAASAKKVLERVPISKPPFEYNDLKKAVPPHCFSRPLSRSLYFLFHDIIVTCILFYVASNYIHMLPRFLSCIVWPVYWISQGVFLGRLWMIGHECGHHSFSNYRWVDDTVGFLIHTATLTPYFSFKYSHRNHHAHTNSMEYDEVHIPKRKSEALYFEFLGNNPIGLMITMLCKLTFGYAAYIMFNYTGKKHKSGGLASHFYPQSPLFNDSERNHVLFSDIGICIVLYACYRIVTVTGAMPAFYVYGIPWVIMSAILFAATYLQHTHPSIPHYDTTEWNWLRGALSTIDRDLGFFNMNKTHYHVIHHLFPVIPEYHAQEATEAIKPILGQYYKYDGTPFLKALWREMKECIYVESDEGQKKQGIYWFKNKT.

The next 2 helical transmembrane spans lie at 44–64 (YFLFHDIIVTCILFYVASNYI) and 74–94 (IVWPVYWISQGVFLGRLWMIG). Positions 95-99 (HECGH) match the Histidine box-1 motif. A Histidine box-2 motif is present at residues 131 to 135 (HRNHH). The next 3 helical transmembrane spans lie at 166-186 (IGLMITMLCKLTFGYAAYIMF), 217-237 (VLFSDIGICIVLYACYRIVTV), and 240-260 (AMPAFYVYGIPWVIMSAILFA). Residues 304–308 (HVIHH) carry the Histidine box-3 motif.

It belongs to the fatty acid desaturase type 1 family. As to expression, expressed exclusively in the developing seeds. Not detected in leaves.

Its subcellular location is the microsome membrane. It carries out the reaction a (9Z,12Z)-octadecadienoyl-containing glycerolipid + AH2 + O2 = a (8E,10E,12Z)-octadecatrienoyl-containing glycerolipid + A + 2 H2O. It functions in the pathway lipid metabolism; polyunsaturated fatty acid biosynthesis. In terms of biological role, fatty acid conjugase converting 18:2(9Z, 12Z) to calendic acid 18:3(8E, 10E, 12Z). Converts alpha-linolenic acid (18:3(9Z, 12Z, 15Z)) into 18:4(8E, 10E, 12Z, 15Z). Also has weak activity on the mono-unsaturates 16:1(9Z) and 18:1(9Z) producing two conjugated double bonds at delta(8) and delta(10) position. The protein is Fatty acid conjugase FAC2 B of Calendula officinalis (Pot marigold).